Reading from the N-terminus, the 147-residue chain is Endoribonuclease YbeY (147 aa).

Residues His109, His113, and His119 each contribute to the Zn(2+) site.

Belongs to the endoribonuclease YbeY family. Requires Zn(2+) as cofactor.

Its subcellular location is the cytoplasm. Functionally, single strand-specific metallo-endoribonuclease involved in late-stage 70S ribosome quality control and in maturation of the 3' terminus of the 16S rRNA. The polypeptide is Endoribonuclease YbeY (Magnetococcus marinus (strain ATCC BAA-1437 / JCM 17883 / MC-1)).